The following is a 634-amino-acid chain: Poly(ribitol-phosphate) beta-glucosyltransferase (634 aa).

It belongs to the glycosyltransferase 2 family.

It carries out the reaction 4-O-[(D-ribitylphospho)(n)-D-ribitylphospho-(2R)-glycerylphospho]-N-acetyl-beta-D-mannosaminyl-(1-&gt;4)-N-acetyl-alpha-D-glucosaminyl di-trans,octa-cis-undecaprenyl diphosphate + n UDP-alpha-D-glucose = 4-O-[(2-beta-D-glucosyl-D-ribitylphospho)(n)-D-ribitylphospho-(2R)-glycerylphospho]-N-acetyl-beta-D-mannosaminyl-(1-&gt;4)-N-acetyl-alpha-D-glucosaminyl di-trans,octa-cis-undecaprenyl diphosphate + n UDP + n H(+). Its pathway is cell wall biogenesis; poly(ribitol phosphate) teichoic acid biosynthesis. Attaches glucose residues to poly(RboP)-wall teichoic acids (WTAs). The protein is Poly(ribitol-phosphate) beta-glucosyltransferase of Bacillus spizizenii (strain ATCC 23059 / NRRL B-14472 / W23) (Bacillus subtilis subsp. spizizenii).